Here is a 250-residue protein sequence, read N- to C-terminus: Serine/arginine-rich splicing factor RS31A (250 aa).

RRM domains lie at 2–74 and 95–166; these read RHVY…WAKD and KTLF…YALR. A disordered region spans residues 170-250; it reads EREDRYAGSR…SRSPIQRARG (81 aa). Over residues 177 to 191 the composition is skewed to basic residues; it reads GSRRRRSPSPVYRRR. Phosphoserine occurs at positions 183, 185, 201, 218, and 243. Residues 192 to 230 are compositionally biased toward basic and acidic residues; sequence PSPDYTRRRSPEYDRYKGPAPYERRKSPDYGRRSSDYGR.

Belongs to the splicing factor SR family. RS subfamily. As to quaternary structure, component of the spliceosome. Interacts with MOS14.

The protein resides in the nucleus speckle. It localises to the nucleus. The protein localises to the nucleoplasm. Its function is as follows. Probably involved in intron recognition and spliceosome assembly. This chain is Serine/arginine-rich splicing factor RS31A (RS31A), found in Arabidopsis thaliana (Mouse-ear cress).